A 248-amino-acid chain; its full sequence is 23S rRNA (guanosine(2553)-2'-O)-methyltransferase RlmP (248 aa).

The S-adenosyl-L-methionine site is built by arginine 123, glycine 204, valine 224, and leucine 233.

This sequence belongs to the class IV-like SAM-binding methyltransferase superfamily. RNA methyltransferase TrmH family. As to quaternary structure, homodimer.

It is found in the cytoplasm. It catalyses the reaction guanosine(2553) in 23S rRNA + S-adenosyl-L-methionine = 2'-O-methylguanosine(2553) in 23S rRNA + S-adenosyl-L-homocysteine + H(+). Functionally, specifically methylates the ribose of guanosine 2553 (G2553) in 23S rRNA. When the target G2553 is mutated, is able to methylate the ribose of adenosine, but it cannot methylate cytidine nor uridine. Modifies free 23S rRNA but not the fully assembled ribosome nor the 50S subunit, suggesting that the modification occurs early during ribosome biogenesis. The sequence is that of 23S rRNA (guanosine(2553)-2'-O)-methyltransferase RlmP from Bacillus subtilis (strain 168).